The primary structure comprises 751 residues: Conserved oligomeric Golgi complex subunit 5 (751 aa).

Disordered regions lie at residues 1–21 and 244–263; these read MVTGDPVATKTPNAADSDDND and SPTHNVSKPAPSRGPGKTPQ.

It belongs to the COG5 family. Component of the conserved oligomeric Golgi complex which is composed of eight different subunits and is required for normal Golgi morphology and localization.

It localises to the golgi apparatus membrane. Functionally, required for normal Golgi function and necessary during spermatogenesis. Required for cleavage furrow ingression during cytokinesis in dividing spermatocytes and for the extensive polarized cell growth that accompanies spermatid elongation. The chain is Conserved oligomeric Golgi complex subunit 5 (fws) from Drosophila melanogaster (Fruit fly).